The sequence spans 144 residues: Phosphomevalonate dehydratase small subunit (144 aa).

Catalysis depends on Ser65, which acts as the Proton acceptor.

This sequence belongs to the AcnX type II small subunit family. Heterodimer composed of a large subunit (PMDh-L) and a small subunit (PMDh-S).

It carries out the reaction (R)-5-phosphomevalonate = (2E)-3-methyl-5-phosphooxypent-2-enoate + H2O. It functions in the pathway isoprenoid biosynthesis; isopentenyl diphosphate biosynthesis via mevalonate pathway. In terms of biological role, component of a hydro-lyase that catalyzes the dehydration of mevalonate 5-phosphate (MVA5P) to form trans-anhydromevalonate 5-phosphate (tAHMP). Involved in the archaeal mevalonate (MVA) pathway, which provides fundamental precursors for isoprenoid biosynthesis, such as isopentenyl diphosphate (IPP) and dimethylallyl diphosphate (DMAPP). In Methanosarcina mazei (strain ATCC BAA-159 / DSM 3647 / Goe1 / Go1 / JCM 11833 / OCM 88) (Methanosarcina frisia), this protein is Phosphomevalonate dehydratase small subunit.